We begin with the raw amino-acid sequence, 403 residues long: Riboflavin biosynthesis protein RibBA (403 aa).

The interval 1–204 is DHBP synthase; that stretch reads MKNKVFASIG…IGELVNYRRR (204 aa). D-ribulose 5-phosphate-binding positions include 30–31, aspartate 35, 143–147, and glutamate 167; these read RE and RTGHT. Position 31 (glutamate 31) interacts with Mg(2+). Residue histidine 146 coordinates Mg(2+). The GTP cyclohydrolase II stretch occupies residues 205-403; it reads TEKFISEIVN…EKMGHMLKKV (199 aa). 255-259 provides a ligand contact to GTP; it reads RVHSS. Residues cysteine 260, cysteine 271, and cysteine 273 each contribute to the Zn(2+) site. Residues glutamine 276, 298–300, and threonine 320 each bind GTP; that span reads EGR. The active-site Proton acceptor; for GTP cyclohydrolase activity is the aspartate 332. Arginine 334 serves as the catalytic Nucleophile; for GTP cyclohydrolase activity. 2 residues coordinate GTP: threonine 355 and lysine 360.

This sequence in the N-terminal section; belongs to the DHBP synthase family. The protein in the C-terminal section; belongs to the GTP cyclohydrolase II family. Requires Mg(2+) as cofactor. Mn(2+) serves as cofactor. Zn(2+) is required as a cofactor.

It catalyses the reaction D-ribulose 5-phosphate = (2S)-2-hydroxy-3-oxobutyl phosphate + formate + H(+). The enzyme catalyses GTP + 4 H2O = 2,5-diamino-6-hydroxy-4-(5-phosphoribosylamino)-pyrimidine + formate + 2 phosphate + 3 H(+). It participates in cofactor biosynthesis; riboflavin biosynthesis; 2-hydroxy-3-oxobutyl phosphate from D-ribulose 5-phosphate: step 1/1. It functions in the pathway cofactor biosynthesis; riboflavin biosynthesis; 5-amino-6-(D-ribitylamino)uracil from GTP: step 1/4. Catalyzes the conversion of D-ribulose 5-phosphate to formate and 3,4-dihydroxy-2-butanone 4-phosphate. In terms of biological role, catalyzes the conversion of GTP to 2,5-diamino-6-ribosylamino-4(3H)-pyrimidinone 5'-phosphate (DARP), formate and pyrophosphate. This Endomicrobium trichonymphae protein is Riboflavin biosynthesis protein RibBA.